Consider the following 480-residue polypeptide: Adenosylhomocysteinase (480 aa).

Substrate contacts are provided by T63, D142, and E203. 204–206 (TTT) is an NAD(+) binding site. Residues K233 and D237 each coordinate substrate. NAD(+)-binding positions include N238, 267–272 (GYGDVG), E290, N325, 346–348 (IGH), and N394.

It belongs to the adenosylhomocysteinase family. The cofactor is NAD(+).

The protein localises to the cytoplasm. It catalyses the reaction S-adenosyl-L-homocysteine + H2O = L-homocysteine + adenosine. The protein operates within amino-acid biosynthesis; L-homocysteine biosynthesis; L-homocysteine from S-adenosyl-L-homocysteine: step 1/1. Its function is as follows. May play a key role in the regulation of the intracellular concentration of adenosylhomocysteine. This Xanthomonas campestris pv. campestris (strain 8004) protein is Adenosylhomocysteinase.